A 420-amino-acid polypeptide reads, in one-letter code: UDP-N-acetylglucosamine 1-carboxyvinyltransferase (420 aa).

22-23 is a binding site for phosphoenolpyruvate; the sequence is KN. Arg91 contributes to the UDP-N-acetyl-alpha-D-glucosamine binding site. The active-site Proton donor is the Cys115. Cys115 is subject to 2-(S-cysteinyl)pyruvic acid O-phosphothioketal. UDP-N-acetyl-alpha-D-glucosamine-binding positions include 120–124, 160–163, Asp305, and Ile327; these read RPVDL and KVSV.

This sequence belongs to the EPSP synthase family. MurA subfamily.

It is found in the cytoplasm. It catalyses the reaction phosphoenolpyruvate + UDP-N-acetyl-alpha-D-glucosamine = UDP-N-acetyl-3-O-(1-carboxyvinyl)-alpha-D-glucosamine + phosphate. The protein operates within cell wall biogenesis; peptidoglycan biosynthesis. In terms of biological role, cell wall formation. Adds enolpyruvyl to UDP-N-acetylglucosamine. The chain is UDP-N-acetylglucosamine 1-carboxyvinyltransferase from Pectobacterium carotovorum subsp. carotovorum (strain PC1).